Here is a 168-residue protein sequence, read N- to C-terminus: MAVKIKLTRLGKIRNPQYRIVVADARTRRDGRSIEVIGRYHPKEEPSLIELNSERAQYWLGVGAQPTEPVLQLLKITGDWQKFKGLPGAEGTLKVKEPKPSKLDLFNAALAEAEGGPSNEATQPKKKKAPAKKAASDIEATADPAGNADKSEPAAEGEDATVAGATEG.

The tract at residues 110–168 is disordered; the sequence is LAEAEGGPSNEATQPKKKKAPAKKAASDIEATADPAGNADKSEPAAEGEDATVAGATEG.

The protein belongs to the bacterial ribosomal protein bS16 family.

The polypeptide is Small ribosomal subunit protein bS16 (Mycobacterium sp. (strain JLS)).